Reading from the N-terminus, the 806-residue chain is MADDGMLLNFEIGDAPLKSQVKFKGGRWRDRLKAQRSAKQSHEDGPSSTPPRNRTTVGGYDAGRLGKRPRTEDGESHRYAKVPRTSDAAPKAPSHAMKTGQISSSLFTSNPSAVTDFDQPPAEEEAEPAKASNAPLSEEAENFHSLGVSRRVAQHLATKLEMKAPTAIQKNTVPQLINGDSDAFLQAETGSGKTLAYLLPIVHRIMSLSLNEDGTPKDTKVHRNSGLFAIIMAPTRELCKQISVVLEKVLRCAPWLVCTTVIGGESKKSEKARIRKGVNILIATPGRLADHLDNTKVLNVGTVRWLVLDEGDRMMEMGFEDDIKTIVGKIRADKLEKVNAEGVVLDGVLPSRRVTVLCSATMKMNVQKLGEISLEDAIHIMAAKSESDGDADAVFAAPSQLKQSCIVTPAKLRLVTLIALLKSTFARRGSVMKAIIFISCADSVDFHYQLLKDTKAVEPPTPDSSSTKDRNPHTDTTVARAAYITSPANPKVMLHKLHGSLAQPVRSATLNAFSACKDPAVLITTDISSRGLDVPAVDLVIEYDPAFAVPDHVHRIGRTARAGRAGKAVLFLLPGCEEGYTTILNSSTPIAPQLYESILQKGLASVVNLPSTHTTSETDKQTWSTRAEALQLHLEQRLLANPAGADDDADDNPNPFRGNKGNHNNNTKPKSKQYKPKIDNPLLDAARQAFRSHIRAYATHVREERVYFDILQLHLGHLAKAFALREPPGGIGGGVARRTHTAANKAAAERKSKVSGGGGGGGRVGFGRGAADDDGDGVGAVDEDAARRMREKMRMVMNASSEFNIG.

Positions 24–135 (KGGRWRDRLK…AEPAKASNAP (112 aa)) are disordered. The span at 46 to 56 (PSSTPPRNRTT) shows a compositional bias: polar residues. A compositionally biased stretch (basic and acidic residues) spans 69-78 (PRTEDGESHR). The segment covering 100–113 (GQISSSLFTSNPSA) has biased composition (polar residues). The Q motif signature appears at 141–170 (ENFHSLGVSRRVAQHLATKLEMKAPTAIQK). The 207-residue stretch at 174–380 (PQLINGDSDA…EISLEDAIHI (207 aa)) folds into the Helicase ATP-binding domain. 187–194 (AETGSGKT) lines the ATP pocket. The DEAD box signature appears at 309–312 (DEGD). Positions 413-611 (RLVTLIALLK…GLASVVNLPS (199 aa)) constitute a Helicase C-terminal domain. 2 disordered regions span residues 642 to 677 (PAGA…YKPK) and 741 to 784 (TAAN…VDED). Positions 755–768 (SGGGGGGGRVGFGR) are enriched in gly residues.

Belongs to the DEAD box helicase family. DDX31/DBP7 subfamily.

The protein resides in the nucleus. It is found in the nucleolus. It catalyses the reaction ATP + H2O = ADP + phosphate + H(+). Functionally, ATP-binding RNA helicase involved in the biogenesis of 60S ribosomal subunits and is required for the normal formation of 25S and 5.8S rRNAs. This Chaetomium globosum (strain ATCC 6205 / CBS 148.51 / DSM 1962 / NBRC 6347 / NRRL 1970) (Soil fungus) protein is ATP-dependent RNA helicase DBP7 (DBP7).